We begin with the raw amino-acid sequence, 174 residues long: UPF0316 protein lmo1776 (174 aa).

Helical transmembrane passes span 4–24 (GIFIVVTIFIVNILYVTIYTV), 36–56 (LAALSSVFEMIIYVVALSLVL), and 62–82 (IANVLAYAVGFGVGIIVGMKI).

This sequence belongs to the UPF0316 family.

The protein localises to the cell membrane. The chain is UPF0316 protein lmo1776 from Listeria monocytogenes serovar 1/2a (strain ATCC BAA-679 / EGD-e).